The chain runs to 382 residues: Galactokinase (382 aa).

34 to 37 (EHTD) lines the substrate pocket. 124–130 (GAGLSSS) contacts ATP. Positions 130 and 162 each coordinate Mg(2+). The Proton acceptor role is filled by D174. Position 223 (Y223) interacts with substrate.

This sequence belongs to the GHMP kinase family. GalK subfamily.

Its subcellular location is the cytoplasm. It catalyses the reaction alpha-D-galactose + ATP = alpha-D-galactose 1-phosphate + ADP + H(+). It participates in carbohydrate metabolism; galactose metabolism. Its function is as follows. Catalyzes the transfer of the gamma-phosphate of ATP to D-galactose to form alpha-D-galactose-1-phosphate (Gal-1-P). This is Galactokinase from Salmonella paratyphi A (strain ATCC 9150 / SARB42).